The primary structure comprises 149 residues: NPC intracellular cholesterol transporter 2 (149 aa).

The first 19 residues, 1–19 (MRFLTVAFLFLALSASALA), serve as a signal peptide directing secretion. Intrachain disulfides connect C27/C140, C42/C47, and C93/C99. N-linked (GlcNAc...) asparagine glycosylation is present at N58. K116 is subject to N6-acetyllysine.

This sequence belongs to the NPC2 family. In terms of assembly, interacts with NPC1 (via the second lumenal domain) in a cholestrol-dependent manner. Interacts with NUS1/NgBR, the interaction stabilizes NCP2 and regulates cholesterol trafficking. Interacts with DHDDS. Interacts with NEDD4L (via C2 domain). Interacts with NPC1L1. In terms of tissue distribution, expressed in kidney, spleen, liver and mammary gland, but not in testis.

It localises to the secreted. The protein localises to the endoplasmic reticulum. It is found in the lysosome. The catalysed reaction is cholesterol(in) = cholesterol(out). Intracellular cholesterol transporter which acts in concert with NPC1 and plays an important role in the egress of cholesterol from the lysosomal compartment. Unesterified cholesterol that has been released from LDLs in the lumen of the late endosomes/lysosomes is transferred by NPC2 to the cholesterol-binding pocket in the N-terminal domain of NPC1. May bind and mobilize cholesterol that is associated with membranes. NPC2 binds cholesterol with a 1:1 stoichiometry. Can bind a variety of sterols, including lathosterol, desmosterol and the plant sterols stigmasterol and beta-sitosterol. The secreted form of NCP2 regulates biliary cholesterol secretion via stimulation of ABCG5/ABCG8-mediated cholesterol transport. In Bos taurus (Bovine), this protein is NPC intracellular cholesterol transporter 2.